Reading from the N-terminus, the 141-residue chain is Hemoglobin subunit alpha (141 aa).

The 141-residue stretch at 1 to 141 (VLSAADKANV…VSTVLTSKYR (141 aa)) folds into the Globin domain. S3 is subject to Phosphoserine. N6-succinyllysine is present on residues K7 and K11. K16 is modified (N6-acetyllysine; alternate). K16 bears the N6-succinyllysine; alternate mark. K40 is subject to N6-succinyllysine. At S49 the chain carries Phosphoserine. Residue H58 participates in O2 binding. Residue H87 coordinates heme b. The residue at position 102 (S102) is a Phosphoserine. At T108 the chain carries Phosphothreonine. Position 124 is a phosphoserine (S124). A phosphothreonine mark is found at T134 and T137. The residue at position 138 (S138) is a Phosphoserine.

The protein belongs to the globin family. As to quaternary structure, heterotetramer of two alpha chains and two beta chains. In terms of tissue distribution, red blood cells.

Its function is as follows. Involved in oxygen transport from the lung to the various peripheral tissues. In terms of biological role, hemopressin acts as an antagonist peptide of the cannabinoid receptor CNR1. Hemopressin-binding efficiently blocks cannabinoid receptor CNR1 and subsequent signaling. The protein is Hemoglobin subunit alpha (HBA) of Sus scrofa (Pig).